Consider the following 370-residue polypeptide: tRNA-specific 2-thiouridylase MnmA 1 (370 aa).

ATP is bound by residues 9 to 16 and Met-35; that span reads GMSGGVDS. The segment at 95 to 97 is interaction with target base in tRNA; it reads NPD. Cys-100 acts as the Nucleophile in catalysis. The cysteines at positions 100 and 196 are disulfide-linked. Gly-124 lines the ATP pocket. An interaction with tRNA region spans residues 146–148; it reads KDQ. Cys-196 (cysteine persulfide intermediate) is an active-site residue. The interaction with tRNA stretch occupies residues 306–307; the sequence is RY.

The protein belongs to the MnmA/TRMU family.

It localises to the cytoplasm. It catalyses the reaction S-sulfanyl-L-cysteinyl-[protein] + uridine(34) in tRNA + AH2 + ATP = 2-thiouridine(34) in tRNA + L-cysteinyl-[protein] + A + AMP + diphosphate + H(+). Catalyzes the 2-thiolation of uridine at the wobble position (U34) of tRNA, leading to the formation of s(2)U34. The protein is tRNA-specific 2-thiouridylase MnmA 1 of Geobacillus kaustophilus (strain HTA426).